The primary structure comprises 253 residues: uncharacterized protein (253 aa).

Residues 1–19 (MRYLKKVTIYISLLILVSG) form the signal peptide. Cys-20 carries N-palmitoyl cysteine lipidation. Cys-20 is lipidated: S-diacylglycerol cysteine.

Belongs to the staphylococcal tandem lipoprotein family.

Its subcellular location is the cell membrane. This is an uncharacterized protein from Staphylococcus epidermidis (strain ATCC 35984 / DSM 28319 / BCRC 17069 / CCUG 31568 / BM 3577 / RP62A).